The sequence spans 440 residues: tRNA(Ile)-lysidine synthase (440 aa).

13–18 (SGGADS) lines the ATP pocket.

The protein belongs to the tRNA(Ile)-lysidine synthase family.

It is found in the cytoplasm. It catalyses the reaction cytidine(34) in tRNA(Ile2) + L-lysine + ATP = lysidine(34) in tRNA(Ile2) + AMP + diphosphate + H(+). In terms of biological role, ligates lysine onto the cytidine present at position 34 of the AUA codon-specific tRNA(Ile) that contains the anticodon CAU, in an ATP-dependent manner. Cytidine is converted to lysidine, thus changing the amino acid specificity of the tRNA from methionine to isoleucine. The polypeptide is tRNA(Ile)-lysidine synthase (Solibacter usitatus (strain Ellin6076)).